Here is a 371-residue protein sequence, read N- to C-terminus: tRNA-specific 2-thiouridylase MnmA (371 aa).

ATP is bound by residues 13–20 (GMSGGVDS) and methionine 39. Residues 99–101 (NPD) form an interaction with target base in tRNA region. Residue cysteine 104 is the Nucleophile of the active site. Cysteine 104 and cysteine 200 form a disulfide bridge. ATP is bound at residue glycine 128. An interaction with tRNA region spans residues 150–152 (KDQ). Cysteine 200 serves as the catalytic Cysteine persulfide intermediate. Residues 308–309 (RY) form an interaction with tRNA region.

This sequence belongs to the MnmA/TRMU family.

Its subcellular location is the cytoplasm. It catalyses the reaction S-sulfanyl-L-cysteinyl-[protein] + uridine(34) in tRNA + AH2 + ATP = 2-thiouridine(34) in tRNA + L-cysteinyl-[protein] + A + AMP + diphosphate + H(+). In terms of biological role, catalyzes the 2-thiolation of uridine at the wobble position (U34) of tRNA, leading to the formation of s(2)U34. This is tRNA-specific 2-thiouridylase MnmA from Bacillus cereus (strain ATCC 14579 / DSM 31 / CCUG 7414 / JCM 2152 / NBRC 15305 / NCIMB 9373 / NCTC 2599 / NRRL B-3711).